The following is a 207-amino-acid chain: Protein GrpE (207 aa).

A compositionally biased stretch (basic and acidic residues) spans 1–11; it reads MTETDGQKDNN. The segment at 1–39 is disordered; sequence MTETDGQKDNNQDTAQAAADPVVSKPYIMPDDPEEGSNE.

The protein belongs to the GrpE family. Homodimer.

The protein localises to the cytoplasm. In terms of biological role, participates actively in the response to hyperosmotic and heat shock by preventing the aggregation of stress-denatured proteins, in association with DnaK and GrpE. It is the nucleotide exchange factor for DnaK and may function as a thermosensor. Unfolded proteins bind initially to DnaJ; upon interaction with the DnaJ-bound protein, DnaK hydrolyzes its bound ATP, resulting in the formation of a stable complex. GrpE releases ADP from DnaK; ATP binding to DnaK triggers the release of the substrate protein, thus completing the reaction cycle. Several rounds of ATP-dependent interactions between DnaJ, DnaK and GrpE are required for fully efficient folding. The chain is Protein GrpE from Rhodopseudomonas palustris (strain TIE-1).